Reading from the N-terminus, the 267-residue chain is U6 snRNA phosphodiesterase 1 (267 aa).

The segment covering 1–13 has biased composition (polar residues); the sequence is MSSAPLVGYSSSG. Positions 1-74 are disordered; that stretch reads MSSAPLVGYS…DSAKHGGRIR (74 aa). Histidine 122 functions as the Proton acceptor in the catalytic mechanism. 122–124 serves as a coordination point for AMP; sequence HVS. Residues glutamine 166, tyrosine 204, and 208–212 contribute to the UMP site; that span reads SFHIS. Residues tyrosine 204 and 206 to 212 contribute to the AMP site; that span reads DPSFHIS. Catalysis depends on histidine 210, which acts as the Proton donor.

It belongs to the 2H phosphoesterase superfamily. USB1 family. Interacts with PLRG1, CDC5L and PRPF19.

It localises to the nucleus. The catalysed reaction is a 3'-end uridylyl-uridine-RNA = a 3'-end 2',3'-cyclophospho-uridine-RNA + uridine. It catalyses the reaction a 3'-end uridylyl-adenosine-RNA = a 3'-end 2',3'-cyclophospho-uridine-RNA + adenosine. 3'-5' RNA exonuclease that trims the 3' end of oligo(U) and oligo(A) tracts of the pre-U6 small nuclear RNA (snRNA) molecule, leading to the formation of a mature U6 snRNA 3' end-terminated with a 2',3'-cyclic phosphate. Participates in the U6 snRNA 3' end processing that prevents U6 snRNA degradation. In addition also removes uridines from the 3' end of U6atac snRNA and possibly the vault RNA VTRNA1-1. The sequence is that of U6 snRNA phosphodiesterase 1 from Mus musculus (Mouse).